Consider the following 231-residue polypeptide: NADH-ubiquinone oxidoreductase chain 4 (231 aa).

A run of 6 helical transmembrane segments spans residues 1–21 (PIAGSMVLAAILLKLGGYGII), 34–54 (MFLPFIVLALWGAVLANLTCL), 63–85 (IAYSSISHMGLVVATIIIQTPWG), 89–111 (AMALMIAHGFTSSALFCLANTTY), 128–148 (ILPMATTWWLLANLMNIAIPP), and 169–189 (TIILLGLSMLITACYSLHMLL).

This sequence belongs to the complex I subunit 4 family.

The protein localises to the mitochondrion membrane. The catalysed reaction is a ubiquinone + NADH + 5 H(+)(in) = a ubiquinol + NAD(+) + 4 H(+)(out). In terms of biological role, core subunit of the mitochondrial membrane respiratory chain NADH dehydrogenase (Complex I) that is believed to belong to the minimal assembly required for catalysis. Complex I functions in the transfer of electrons from NADH to the respiratory chain. The immediate electron acceptor for the enzyme is believed to be ubiquinone. The chain is NADH-ubiquinone oxidoreductase chain 4 (MT-ND4) from Bothrops bilineatus (Green jararaca).